A 255-amino-acid polypeptide reads, in one-letter code: 3-deoxy-manno-octulosonate cytidylyltransferase (255 aa).

Belongs to the KdsB family.

The protein localises to the cytoplasm. The enzyme catalyses 3-deoxy-alpha-D-manno-oct-2-ulosonate + CTP = CMP-3-deoxy-beta-D-manno-octulosonate + diphosphate. It participates in nucleotide-sugar biosynthesis; CMP-3-deoxy-D-manno-octulosonate biosynthesis; CMP-3-deoxy-D-manno-octulosonate from 3-deoxy-D-manno-octulosonate and CTP: step 1/1. The protein operates within bacterial outer membrane biogenesis; lipopolysaccharide biosynthesis. Activates KDO (a required 8-carbon sugar) for incorporation into bacterial lipopolysaccharide in Gram-negative bacteria. This Glaesserella parasuis serovar 5 (strain SH0165) (Haemophilus parasuis) protein is 3-deoxy-manno-octulosonate cytidylyltransferase.